Here is a 240-residue protein sequence, read N- to C-terminus: tRNA (guanine-N(7)-)-methyltransferase (240 aa).

S-adenosyl-L-methionine-binding residues include glutamate 71, glutamate 96, aspartate 123, and aspartate 146. Aspartate 146 is a catalytic residue. Substrate contacts are provided by residues lysine 150, aspartate 182, and 219 to 222; that span reads TKFE.

The protein belongs to the class I-like SAM-binding methyltransferase superfamily. TrmB family.

It catalyses the reaction guanosine(46) in tRNA + S-adenosyl-L-methionine = N(7)-methylguanosine(46) in tRNA + S-adenosyl-L-homocysteine. The protein operates within tRNA modification; N(7)-methylguanine-tRNA biosynthesis. Its function is as follows. Catalyzes the formation of N(7)-methylguanine at position 46 (m7G46) in tRNA. This chain is tRNA (guanine-N(7)-)-methyltransferase, found in Hydrogenovibrio crunogenus (strain DSM 25203 / XCL-2) (Thiomicrospira crunogena).